The primary structure comprises 229 residues: Ribonuclease 3 (229 aa).

Residues 4–133 (WEELQESVGF…FIGALYLDNG (130 aa)) form the RNase III domain. E46 is a Mg(2+) binding site. D50 is a catalytic residue. Residues D119 and E122 each contribute to the Mg(2+) site. E122 is a catalytic residue. Positions 159 to 228 (DYKTQLQEIV…AQFAINQLTH (70 aa)) constitute a DRBM domain.

Belongs to the ribonuclease III family. As to quaternary structure, homodimer. Mg(2+) is required as a cofactor.

It is found in the cytoplasm. The catalysed reaction is Endonucleolytic cleavage to 5'-phosphomonoester.. Functionally, digests double-stranded RNA. Involved in the processing of primary rRNA transcript to yield the immediate precursors to the large and small rRNAs (23S and 16S). Processes some mRNAs, and tRNAs when they are encoded in the rRNA operon. Processes pre-crRNA and tracrRNA of type II CRISPR loci if present in the organism. The sequence is that of Ribonuclease 3 from Listeria welshimeri serovar 6b (strain ATCC 35897 / DSM 20650 / CCUG 15529 / CIP 8149 / NCTC 11857 / SLCC 5334 / V8).